The primary structure comprises 348 residues: 3-isopropylmalate dehydrogenase (348 aa).

Glycine 76 to glutamate 87 is an NAD(+) binding site. Substrate is bound by residues arginine 94, arginine 104, arginine 132, and aspartate 217. Aspartate 217, aspartate 241, and aspartate 245 together coordinate Mg(2+). Residue glycine 275–asparagine 287 coordinates NAD(+).

Belongs to the isocitrate and isopropylmalate dehydrogenases family. LeuB type 1 subfamily. In terms of assembly, homodimer. It depends on Mg(2+) as a cofactor. The cofactor is Mn(2+).

The protein localises to the cytoplasm. It carries out the reaction (2R,3S)-3-isopropylmalate + NAD(+) = 4-methyl-2-oxopentanoate + CO2 + NADH. The protein operates within amino-acid biosynthesis; L-leucine biosynthesis; L-leucine from 3-methyl-2-oxobutanoate: step 3/4. In terms of biological role, catalyzes the oxidation of 3-carboxy-2-hydroxy-4-methylpentanoate (3-isopropylmalate) to 3-carboxy-4-methyl-2-oxopentanoate. The product decarboxylates to 4-methyl-2 oxopentanoate. The sequence is that of 3-isopropylmalate dehydrogenase from Staphylococcus aureus (strain COL).